We begin with the raw amino-acid sequence, 234 residues long: MSIISMKQLLESGVHFGHQTRRWNPKMASYIFTERNGIYIIDLQKTVRKIEEAYEFVKKIASEGKDILFIGTKKQAQEAIKEEAKRSNMHYVNNRWLGGMLTNFLTIRNRIGKLEELEKMEEDGTFEVLSKKEVIKLRNEKQKLERNLGGIKAMNAENVGALFVVDPRKEKNAISEAKILGIPVVAIVDTNCDPDEVDYVIPGNDDAIRAVKLITSKVADAVIEGRQGEQLAEE.

The protein belongs to the universal ribosomal protein uS2 family.

The polypeptide is Small ribosomal subunit protein uS2 (Clostridium kluyveri (strain NBRC 12016)).